Reading from the N-terminus, the 809-residue chain is Lethal factor (809 aa).

Positions Met1–Gly33 are cleaved as a signal peptide. The segment at Asp39–Glu66 is disordered. A compositionally biased stretch (basic and acidic residues) spans Val40–Glu66. An i; PA-binding region region spans residues Glu60–Gln295. An ATLF-like 1 domain is found at Lys70–Glu282. The IIA stretch occupies residues Arg296–Gln330. 5 consecutive repeat copies span residues Ser315–Ile333, His342–Ile357, Ser360–Ile378, Asp380–Ser397, and Asn399–Ile416. Residues Ser315 to Ile416 are 5 X approximate repeats. The tract at residues Lys336–Ile416 is III. An IIB region spans residues Asp420–Val583. An IV region spans residues Lys585–Ser809. In terms of domain architecture, ATLF-like 2 spans Leu609 to Lys804. His719 lines the Zn(2+) pocket. Catalysis depends on Glu720, which acts as the Proton acceptor. Residues His723, Tyr761, and Glu768 each coordinate Zn(2+).

Belongs to the peptidase M34 family. As to quaternary structure, interacts (via ATLF domain 1) with the cleaved form of protective antigen (PA-63) anthrax toxin; interaction is required for LF translocation into the host cytoplasm. Interacts with PA-63 homooligomers (either homoheptamers or homooctamers): three molecules of LF bind the PA-63 homoheptamer to form the PA(7)LF(3) complex, in which the relative position of the N-terminal alpha-helices in the three LFs determines which factor is translocated first. Requires Zn(2+) as cofactor.

It is found in the secreted. It localises to the host cytoplasm. The protein resides in the host cytosol. The catalysed reaction is Preferred amino acids around the cleavage site can be denoted BBBBxHx-|-H, in which B denotes Arg or Lys, H denotes a hydrophobic amino acid, and x is any amino acid. The only known protein substrates are mitogen-activated protein (MAP) kinase kinases.. Its activity is regulated as follows. Inhibited by NSC-12155 (1,3-Bis(2-methyl-4-aminoquinoline-6-yl)ure). Inhibited by phenoxyacetic acid bearing alpha-benzyl substituents on the C2-side chain. Inhibited by sulfonamide hydroxamate with benzylic additions at the sulfonamide nitrogen. Also inhibited by sulfonamide hydroxamates with alkylation at the sulfonamide nitrogen. Inhibited by hydroxamic acid inhibitors. In terms of biological role, lethal factor (LF), which constitutes one of the three proteins composing the anthrax toxin, is able to trigger rapid cell death in macrophages. Acts as a protease that cleaves the N-terminal of most dual specificity mitogen-activated protein kinase kinases (MAPKKs or MAP2Ks) (except for MAP2K5): cleavage invariably occurs within the N-terminal proline-rich region preceding the kinase domain, thus disrupting a sequence involved in directing specific protein-protein interactions necessary for the assembly of signaling complexes. Also cleaves mouse Nlrp1b: host Nlrp1b cleavage promotes ubiquitination and degradation of the N-terminal part of Nlrp1b by the proteasome, thereby releasing the cleaved C-terminal part of Nlrp1b, which polymerizes and forms the Nlrp1b inflammasome followed by host cell pyroptosis. Able to cleave mouse Nlrp1b alleles 1 and 5, while it is not able to cleave Nlrp1b alleles 2, 3 and 4. In contrast, does not cleave NLRP1 human ortholog. LF is not toxic by itself and only acts as a lethal factor when associated with protective antigen (PA) to form the lethal toxin (LeTx): PA is required for LF translocation into the host cytosol. The protein is Lethal factor of Bacillus anthracis.